Here is a 1957-residue protein sequence, read N- to C-terminus: Sporulation-specific protein 15 (1957 aa).

Low complexity-rich tracts occupy residues 1-12 and 19-28; these read MSNQSSSGSNTS and ASSLVSSAAS. The interval 1-102 is disordered; the sequence is MSNQSSSGSN…STASSALPLT (102 aa). Basic and acidic residues predominate over residues 58-83; it reads SQHEDSSEELKRQEVRGMRRHSDLSI. Positions 90–102 are enriched in polar residues; it reads SEGSTASSALPLT. Ser105 bears the Phosphoserine mark. Coiled coils occupy residues 199-785, 804-1235, 1320-1471, and 1481-1723; these read KQSE…FTSL, VNMQ…DLLD, KVVA…SLDD, and EKLG…EQHE.

This sequence belongs to the MPC70 family. As to quaternary structure, monomer.

It localises to the cytoplasm. It is found in the cytoskeleton. The protein resides in the microtubule organizing center. The protein localises to the spindle pole body. Functionally, has a role in the initiation of spore membrane formation. The sequence is that of Sporulation-specific protein 15 (spo15) from Schizosaccharomyces pombe (strain 972 / ATCC 24843) (Fission yeast).